The chain runs to 425 residues: UDP-N-acetylglucosamine 1-carboxyvinyltransferase (425 aa).

22–23 (KN) is a binding site for phosphoenolpyruvate. A UDP-N-acetyl-alpha-D-glucosamine-binding site is contributed by Arg-93. Cys-117 serves as the catalytic Proton donor. At Cys-117 the chain carries 2-(S-cysteinyl)pyruvic acid O-phosphothioketal. UDP-N-acetyl-alpha-D-glucosamine contacts are provided by residues 122-126 (RPVDL), 162-165 (KVSV), Asp-307, and Ile-329.

Belongs to the EPSP synthase family. MurA subfamily.

Its subcellular location is the cytoplasm. The catalysed reaction is phosphoenolpyruvate + UDP-N-acetyl-alpha-D-glucosamine = UDP-N-acetyl-3-O-(1-carboxyvinyl)-alpha-D-glucosamine + phosphate. It participates in cell wall biogenesis; peptidoglycan biosynthesis. Functionally, cell wall formation. Adds enolpyruvyl to UDP-N-acetylglucosamine. The polypeptide is UDP-N-acetylglucosamine 1-carboxyvinyltransferase (Pasteurella multocida (strain Pm70)).